We begin with the raw amino-acid sequence, 669 residues long: Probable pectinesterase/pectinesterase inhibitor 21 (669 aa).

Residues 16–36 form a helical membrane-spanning segment; sequence IVITISSVLLISMVVAVTVGV. 5 N-linked (GlcNAc...) asparagine glycosylation sites follow: asparagine 52, asparagine 81, asparagine 94, asparagine 281, and asparagine 300. Positions 52–205 are pectinesterase inhibitor 21; that stretch reads NASVKAVKDV…IELTHNGLAI (154 aa). The interval 255–551 is pectinesterase 21; the sequence is DIVVAQDGSG…FTPAQYIQGD (297 aa). Threonine 330 and glutamine 360 together coordinate substrate. The Proton donor; for pectinesterase activity role is filled by aspartate 383. Cysteine 397 and cysteine 417 form a disulfide bridge. Aspartate 404 functions as the Nucleophile; for pectinesterase activity in the catalytic mechanism. The N-linked (GlcNAc...) asparagine glycan is linked to asparagine 416. Substrate contacts are provided by arginine 472 and tryptophan 474. The segment at 615–669 is disordered; that stretch reads AYTGTASPESSIKVSSSTETASPESSFTEASTASPESSIMVASTESSGSFFSMFT. Over residues 616-628 the composition is skewed to polar residues; that stretch reads YTGTASPESSIKV. Positions 629–652 are enriched in low complexity; sequence SSSTETASPESSFTEASTASPESS. A compositionally biased stretch (polar residues) spans 654 to 669; it reads MVASTESSGSFFSMFT.

The protein in the N-terminal section; belongs to the PMEI family. It in the C-terminal section; belongs to the pectinesterase family. Expressed in flower buds.

The protein resides in the membrane. It catalyses the reaction [(1-&gt;4)-alpha-D-galacturonosyl methyl ester](n) + n H2O = [(1-&gt;4)-alpha-D-galacturonosyl](n) + n methanol + n H(+). It participates in glycan metabolism; pectin degradation; 2-dehydro-3-deoxy-D-gluconate from pectin: step 1/5. In terms of biological role, acts in the modification of cell walls via demethylesterification of cell wall pectin. The chain is Probable pectinesterase/pectinesterase inhibitor 21 (PME21) from Arabidopsis thaliana (Mouse-ear cress).